The primary structure comprises 163 residues: D-aminoacyl-tRNA deacylase (163 aa).

The Gly-cisPro motif, important for rejection of L-amino acids signature appears at 141-142 (GP).

This sequence belongs to the DTD family. As to quaternary structure, homodimer.

The protein localises to the cytoplasm. The enzyme catalyses glycyl-tRNA(Ala) + H2O = tRNA(Ala) + glycine + H(+). It catalyses the reaction a D-aminoacyl-tRNA + H2O = a tRNA + a D-alpha-amino acid + H(+). In terms of biological role, an aminoacyl-tRNA editing enzyme that deacylates mischarged D-aminoacyl-tRNAs. Also deacylates mischarged glycyl-tRNA(Ala), protecting cells against glycine mischarging by AlaRS. Acts via tRNA-based rather than protein-based catalysis; rejects L-amino acids rather than detecting D-amino acids in the active site. By recycling D-aminoacyl-tRNA to D-amino acids and free tRNA molecules, this enzyme counteracts the toxicity associated with the formation of D-aminoacyl-tRNA entities in vivo and helps enforce protein L-homochirality. This Neisseria meningitidis serogroup A / serotype 4A (strain DSM 15465 / Z2491) protein is D-aminoacyl-tRNA deacylase.